The following is a 352-amino-acid chain: Chorismate synthase (352 aa).

Residue Arg-48 participates in NADP(+) binding. FMN contacts are provided by residues 125–127 (RSS), 237–238 (NA), Gly-278, 293–297 (KPTSS), and Arg-319.

It belongs to the chorismate synthase family. As to quaternary structure, homotetramer. FMNH2 is required as a cofactor.

It carries out the reaction 5-O-(1-carboxyvinyl)-3-phosphoshikimate = chorismate + phosphate. It functions in the pathway metabolic intermediate biosynthesis; chorismate biosynthesis; chorismate from D-erythrose 4-phosphate and phosphoenolpyruvate: step 7/7. Its function is as follows. Catalyzes the anti-1,4-elimination of the C-3 phosphate and the C-6 proR hydrogen from 5-enolpyruvylshikimate-3-phosphate (EPSP) to yield chorismate, which is the branch point compound that serves as the starting substrate for the three terminal pathways of aromatic amino acid biosynthesis. This reaction introduces a second double bond into the aromatic ring system. In Francisella tularensis subsp. mediasiatica (strain FSC147), this protein is Chorismate synthase.